We begin with the raw amino-acid sequence, 260 residues long: Glucosamine-6-phosphate deaminase (260 aa).

The active-site Proton acceptor; for enolization step is Asp67. The active-site For ring-opening step is Asp136. Residue His138 is the Proton acceptor; for ring-opening step of the active site. Residue Glu143 is the For ring-opening step of the active site.

This sequence belongs to the glucosamine/galactosamine-6-phosphate isomerase family. NagB subfamily.

It catalyses the reaction alpha-D-glucosamine 6-phosphate + H2O = beta-D-fructose 6-phosphate + NH4(+). It participates in amino-sugar metabolism; N-acetylneuraminate degradation; D-fructose 6-phosphate from N-acetylneuraminate: step 5/5. Catalyzes the reversible isomerization-deamination of glucosamine 6-phosphate (GlcN6P) to form fructose 6-phosphate (Fru6P) and ammonium ion. In Arthrobacter sp. (strain FB24), this protein is Glucosamine-6-phosphate deaminase.